We begin with the raw amino-acid sequence, 465 residues long: Probable Xaa-Pro aminopeptidase pepP (465 aa).

Mn(2+) contacts are provided by aspartate 263, aspartate 274, glutamate 397, and glutamate 437.

It belongs to the peptidase M24B family. Mn(2+) is required as a cofactor.

It carries out the reaction Release of any N-terminal amino acid, including proline, that is linked to proline, even from a dipeptide or tripeptide.. In terms of biological role, catalyzes the removal of a penultimate prolyl residue from the N-termini of peptides. The protein is Probable Xaa-Pro aminopeptidase pepP (pepP) of Penicillium rubens (strain ATCC 28089 / DSM 1075 / NRRL 1951 / Wisconsin 54-1255) (Penicillium chrysogenum).